The chain runs to 161 residues: Small ribosomal subunit protein bS6 (161 aa).

The interval 107 to 161 (KGDERERGFRGPKPAGRFESGRGGAGGARRGYDDREEFRARNEREDGRDTDGEAE) is disordered. Positions 136-161 (RGYDDREEFRARNEREDGRDTDGEAE) are enriched in basic and acidic residues.

The protein belongs to the bacterial ribosomal protein bS6 family.

In terms of biological role, binds together with bS18 to 16S ribosomal RNA. This is Small ribosomal subunit protein bS6 from Gluconacetobacter diazotrophicus (strain ATCC 49037 / DSM 5601 / CCUG 37298 / CIP 103539 / LMG 7603 / PAl5).